Here is a 54-residue protein sequence, read N- to C-terminus: Large ribosomal subunit protein bL33 (54 aa).

This sequence belongs to the bacterial ribosomal protein bL33 family.

This is Large ribosomal subunit protein bL33 from Stenotrophomonas maltophilia (strain R551-3).